Reading from the N-terminus, the 342-residue chain is Anthranilate phosphoribosyltransferase (342 aa).

5-phospho-alpha-D-ribose 1-diphosphate contacts are provided by residues glycine 83, 86 to 87, threonine 91, 93 to 96, 111 to 119, and serine 123; these read GD, NIST, and KHGGRSVSS. Anthranilate is bound at residue glycine 83. A Mg(2+)-binding site is contributed by serine 95. Position 169 (arginine 169) interacts with anthranilate. Mg(2+) is bound by residues aspartate 228 and glutamate 229.

It belongs to the anthranilate phosphoribosyltransferase family. As to quaternary structure, homodimer. Mg(2+) is required as a cofactor.

It catalyses the reaction N-(5-phospho-beta-D-ribosyl)anthranilate + diphosphate = 5-phospho-alpha-D-ribose 1-diphosphate + anthranilate. It functions in the pathway amino-acid biosynthesis; L-tryptophan biosynthesis; L-tryptophan from chorismate: step 2/5. In terms of biological role, catalyzes the transfer of the phosphoribosyl group of 5-phosphorylribose-1-pyrophosphate (PRPP) to anthranilate to yield N-(5'-phosphoribosyl)-anthranilate (PRA). The sequence is that of Anthranilate phosphoribosyltransferase from Laribacter hongkongensis (strain HLHK9).